The primary structure comprises 206 residues: Heterochromatin protein 1 (206 aa).

Disordered stretches follow at residues 1–24 (MGKK…EEEY) and 47–145 (GYPE…GFDR). 2 positions are modified to phosphoserine: S11 and S15. A Chromo 1 domain is found at 24–82 (YAVEKIIDRRVRKGKVEYYLKWKGYPETENTWEPENNLDCQDLIQQYEASRKDEEKSAA). A compositionally biased stretch (low complexity) spans 50-60 (ETENTWEPENN). Basic and acidic residues predominate over residues 72 to 98 (ASRKDEEKSAASKKDRPSSSAKAKETQ). The segment at 95-206 (KETQGRASSS…RLSWYSDNED (112 aa)) is binds to Su(var)39. Residues S102, S103, and S113 each carry the phosphoserine modification. Phosphothreonine occurs at positions 127, 128, and 134. In terms of domain architecture, Chromo 2 spans 147 to 205 (LEAEKILGASDNNGRLTFLIQFKGVDQAEMVPSSVANEKIPRMVIHFYEERLSWYSDNE).

In terms of assembly, homodimer. Probably associates with Su(var)3-9. Interacts with Mcm10. Interacts (via chromoshadow domain) with piwi (via N-terminal region). Interacts with Rrp6. Associates with and may be part of the HipHop-HOAP telomere capping complex but is not required for its stability or telomere localization. Interacts (via the chromo domain 2 (chromoshadow domain) and the hinge region between chromo domains 1 and 2) with cav/HOAP (via C-terminus); the interaction is direct. Each molecule of cav/HOAP interacts with 2 molecules of Su(var)205/HP1. Interacts with HipHop (via N-terminus). Interacts with moi/modigliani; the interaction is direct. Interacts (via chromo domain 1) with His3/histone 3 (via N-terminal tail methylated at 'Lys-10'); the interaction is direct. In terms of tissue distribution, salivary gland (at protein level).

It localises to the nucleus. The protein localises to the nucleoplasm. It is found in the chromosome. Its subcellular location is the telomere. Its function is as follows. Structural component of heterochromatin, involved in gene repression and the modification of position-effect-variegation. Recognizes and binds histone H3 tails methylated at 'Lys-9', leading to epigenetic repression. Stabilizes chromatin-associated RNAs probably by binding to them and thereby preventing their degradation. Associates with, and may be a part of, the HipHop-HOAP complex that recruits the MTV complex to form the terminin telomere-capping complex, which binds to chromosome ends in a sequence-independent manner and prevents telomere fusion. Telomere capping is independent of the origin recognition complex (ORC). The polypeptide is Heterochromatin protein 1 (Drosophila melanogaster (Fruit fly)).